Reading from the N-terminus, the 128-residue chain is Aspartate 1-decarboxylase (128 aa).

Catalysis depends on S25, which acts as the Schiff-base intermediate with substrate; via pyruvic acid. S25 is subject to Pyruvic acid (Ser). Substrate is bound at residue T57. The active-site Proton donor is the Y58. 73–75 lines the substrate pocket; the sequence is GAA.

It belongs to the PanD family. Heterooctamer of four alpha and four beta subunits. It depends on pyruvate as a cofactor. In terms of processing, is synthesized initially as an inactive proenzyme, which is activated by self-cleavage at a specific serine bond to produce a beta-subunit with a hydroxyl group at its C-terminus and an alpha-subunit with a pyruvoyl group at its N-terminus.

It localises to the cytoplasm. The catalysed reaction is L-aspartate + H(+) = beta-alanine + CO2. It participates in cofactor biosynthesis; (R)-pantothenate biosynthesis; beta-alanine from L-aspartate: step 1/1. In terms of biological role, catalyzes the pyruvoyl-dependent decarboxylation of aspartate to produce beta-alanine. In Chlorobaculum parvum (strain DSM 263 / NCIMB 8327) (Chlorobium vibrioforme subsp. thiosulfatophilum), this protein is Aspartate 1-decarboxylase.